Here is a 728-residue protein sequence, read N- to C-terminus: Double-strand break repair protein mre-11 (728 aa).

Residues 1–12 are compositionally biased toward acidic residues; the sequence is MCGSDDSFDDFV. The disordered stretch occupies residues 1–45; that stretch reads MCGSDDSFDDFVPDSQEPASSRTRNQDHLDDDEVPCSQRPDAAND. Residues Asp-73, His-75, Asp-113, and Asn-181 each coordinate Mn(2+). The Proton donor role is filled by His-182. Mn(2+) contacts are provided by His-269, His-301, and His-303. Positions 601 to 728 are disordered; the sequence is KNPVADVEME…PSKKRDLSFF (128 aa). The span at 607 to 616 shows a compositional bias: acidic residues; sequence VEMEEDEDDP. The segment covering 622 to 632 has biased composition (polar residues); the sequence is PQSTSRTNYAS. The span at 634 to 645 shows a compositional bias: acidic residues; it reads SEDEVANSDEEM.

Belongs to the MRE11/RAD32 family. As to quaternary structure, component of the MRN complex composed of two heterodimers rad-50 and mre-11 associated with a single nbs-1. Mn(2+) serves as cofactor.

The protein resides in the nucleus. It is found in the chromosome. Core component of the MRN complex, which plays a central role in double-strand break (DSB) repair, DNA recombination, maintenance of telomere integrity and meiosis. The MRN complex is involved in the repair of DNA double-strand breaks (DSBs) via homologous recombination (HR), an error-free mechanism which primarily occurs during S and G2 phases. The complex (1) mediates the end resection of damaged DNA, which generates proper single-stranded DNA, a key initial steps in HR, and is (2) required for the recruitment of other repair factors and efficient activation of ATM and ATR upon DNA damage. Within the MRN complex, mre-11 possesses both single-strand endonuclease activity and double-strand-specific 3'-5' exonuclease activity. Mre-11 first endonucleolytically cleaves the 5' strand at DNA DSB ends to prevent non-homologous end joining (NHEJ) and licence HR. It then generates a single-stranded DNA gap via 3' to 5' exonucleolytic degradation, which is required for single-strand invasion and recombination. Required for meiotic crossing over and chiasma formation. Pachytene morphology and homolog pairing are normal. Vital in long term for maintenance of reproductive capacity of subsequent generations. This Caenorhabditis elegans protein is Double-strand break repair protein mre-11.